The following is a 249-amino-acid chain: Triosephosphate isomerase (249 aa).

Residue 9–11 (NWK) participates in substrate binding. The active-site Electrophile is the H94. The active-site Proton acceptor is E166. Substrate-binding positions include G172 and 232–233 (GG).

It belongs to the triosephosphate isomerase family. Homodimer.

It localises to the cytoplasm. The enzyme catalyses D-glyceraldehyde 3-phosphate = dihydroxyacetone phosphate. It participates in carbohydrate biosynthesis; gluconeogenesis. Its pathway is carbohydrate degradation; glycolysis; D-glyceraldehyde 3-phosphate from glycerone phosphate: step 1/1. Its function is as follows. Involved in the gluconeogenesis. Catalyzes stereospecifically the conversion of dihydroxyacetone phosphate (DHAP) to D-glyceraldehyde-3-phosphate (G3P). The sequence is that of Triosephosphate isomerase from Xylella fastidiosa (strain M23).